The chain runs to 273 residues: MEKALKIKQIVVVLIAIAAVAIGYYMFQSITSPAKAVAKQENVVQLASEQPKVEMNKTAPSRFNGKERKVAYLTFDDGPGKYTAELLNTLKQHDAKATFFLIGANVKEFPDLVKRENAEGHYVGMHSMTHNFAKLYKNGEYVNEMKEDQGLIANIIGKSPKLTRPPYGSMPGLNEGLRNKVVEGGFKVWDWTIDSLDWRYNKMPVDAAAAQIAQNVLTNATKPQEVILMHDIHPQSVAAVPAILKGLKEKGYEFEAYHEESHFPVNFWHDNRM.

A helical transmembrane segment spans residues 10 to 30; that stretch reads IVVVLIAIAAVAIGYYMFQSI. One can recognise a NodB homology domain in the interval 69–255; the sequence is KVAYLTFDDG…GLKEKGYEFE (187 aa). Residue aspartate 76 is the Proton acceptor of the active site. Zn(2+)-binding residues include aspartate 77, histidine 126, and histidine 130. The active-site Proton donor is histidine 230.

Belongs to the polysaccharide deacetylase family. It depends on Zn(2+) as a cofactor. Co(2+) is required as a cofactor. Requires Ni(2+) as cofactor.

Its subcellular location is the cell membrane. It carries out the reaction peptidoglycan-N-acetyl-D-glucosamine + H2O = peptidoglycan-D-glucosamine + acetate.. With respect to regulation, inhibited by the hydroxamate N-hydroxy-4-(naphthalene-1-yl)benzamide (NHNB). Its function is as follows. Catalyzes the deacetylation of N-acetylglucosamine (GlcNAc) residues in peptidoglycan. This Bacillus cereus (strain ATCC 14579 / DSM 31 / CCUG 7414 / JCM 2152 / NBRC 15305 / NCIMB 9373 / NCTC 2599 / NRRL B-3711) protein is Peptidoglycan-N-acetylglucosamine deacetylase BC_1974.